A 64-amino-acid polypeptide reads, in one-letter code: MAKLKTRRGAAKRFKATANGFKRKQAFKRHILTKKSAKRIRQLRGCVMVHVSDMNSVRRMCPYI.

Belongs to the bacterial ribosomal protein bL35 family.

This chain is Large ribosomal subunit protein bL35, found in Acinetobacter baylyi (strain ATCC 33305 / BD413 / ADP1).